The sequence spans 734 residues: Methionine--tRNA ligase (734 aa).

A 'HIGH' region motif is present at residues 12 to 22; that stretch reads PYVNNIPHLGN. The Zn(2+) site is built by C143, C146, C155, and C158. The short motif at 330–334 is the 'KMSKS' region element; the sequence is KFSKS. K333 is an ATP binding site. The 106-residue stretch at 570 to 675 folds into the tRNA-binding domain; it reads FREKVLLRVV…QNPIAGERII (106 aa).

It belongs to the class-I aminoacyl-tRNA synthetase family. MetG type 1 subfamily. Homodimer. It depends on Zn(2+) as a cofactor.

It localises to the cytoplasm. It catalyses the reaction tRNA(Met) + L-methionine + ATP = L-methionyl-tRNA(Met) + AMP + diphosphate. Functionally, is required not only for elongation of protein synthesis but also for the initiation of all mRNA translation through initiator tRNA(fMet) aminoacylation. This Borreliella burgdorferi (strain ZS7) (Borrelia burgdorferi) protein is Methionine--tRNA ligase.